The following is a 509-amino-acid chain: 2-isopropylmalate synthase (509 aa).

Positions 5-267 (IQIFDTTLRD…QTALNLEETK (263 aa)) constitute a Pyruvate carboxyltransferase domain. Mn(2+)-binding residues include D14, H202, H204, and N238. Residues 391–509 (KLETLQLQYV…AAENVEKVGN (119 aa)) are regulatory domain.

Belongs to the alpha-IPM synthase/homocitrate synthase family. LeuA type 1 subfamily. In terms of assembly, homodimer. It depends on Mn(2+) as a cofactor.

It localises to the cytoplasm. The catalysed reaction is 3-methyl-2-oxobutanoate + acetyl-CoA + H2O = (2S)-2-isopropylmalate + CoA + H(+). The protein operates within amino-acid biosynthesis; L-leucine biosynthesis; L-leucine from 3-methyl-2-oxobutanoate: step 1/4. Functionally, catalyzes the condensation of the acetyl group of acetyl-CoA with 3-methyl-2-oxobutanoate (2-ketoisovalerate) to form 3-carboxy-3-hydroxy-4-methylpentanoate (2-isopropylmalate). This chain is 2-isopropylmalate synthase, found in Staphylococcus aureus (strain MRSA252).